Reading from the N-terminus, the 431-residue chain is Enolase (431 aa).

Residue Gln-167 coordinates (2R)-2-phosphoglycerate. The Proton donor role is filled by Glu-209. 3 residues coordinate Mg(2+): Asp-246, Glu-289, and Asp-316. (2R)-2-phosphoglycerate-binding residues include Lys-341, Arg-370, Ser-371, and Lys-392. Lys-341 serves as the catalytic Proton acceptor.

This sequence belongs to the enolase family. In terms of assembly, component of the RNA degradosome, a multiprotein complex involved in RNA processing and mRNA degradation. The cofactor is Mg(2+).

It localises to the cytoplasm. The protein resides in the secreted. The protein localises to the cell surface. It carries out the reaction (2R)-2-phosphoglycerate = phosphoenolpyruvate + H2O. It participates in carbohydrate degradation; glycolysis; pyruvate from D-glyceraldehyde 3-phosphate: step 4/5. Its function is as follows. Catalyzes the reversible conversion of 2-phosphoglycerate (2-PG) into phosphoenolpyruvate (PEP). It is essential for the degradation of carbohydrates via glycolysis. The sequence is that of Enolase from Shewanella oneidensis (strain ATCC 700550 / JCM 31522 / CIP 106686 / LMG 19005 / NCIMB 14063 / MR-1).